The following is a 288-amino-acid chain: ATP synthase gamma chain (288 aa).

It belongs to the ATPase gamma chain family. As to quaternary structure, F-type ATPases have 2 components, CF(1) - the catalytic core - and CF(0) - the membrane proton channel. CF(1) has five subunits: alpha(3), beta(3), gamma(1), delta(1), epsilon(1). CF(0) has three main subunits: a, b and c.

The protein resides in the cell inner membrane. In terms of biological role, produces ATP from ADP in the presence of a proton gradient across the membrane. The gamma chain is believed to be important in regulating ATPase activity and the flow of protons through the CF(0) complex. The chain is ATP synthase gamma chain from Rickettsia typhi (strain ATCC VR-144 / Wilmington).